The primary structure comprises 637 residues: Poly(U)-binding-splicing factor hfp (637 aa).

2 stretches are compositionally biased toward basic and acidic residues: residues 1–20 (MGSN…REIS) and 28–37 (TRSDSGKSTD). The segment at 1–41 (MGSNDRASRSPRSDDQREISDMPATKRTRSDSGKSTDSKIP) is disordered. Phosphoserine is present on residues Ser-13 and Ser-30. 2 RRM domains span residues 130–208 (CRVY…RPSN) and 227–305 (NRIY…RSIT). Residues 537–627 (RVIILRNMVG…RRVVAELYDQ (91 aa)) enclose the RRM 3; atypical domain.

This sequence belongs to the RRM half pint family. In terms of assembly, interacts with enc. However, given the cytoplasmic localization of enc, the relevance of such interaction is unclear. Expressed in all germline cells and within the follicle cell.

The protein resides in the nucleus. Functionally, splicing factor that regulates oogenesis and controls both mitosis and mRNA localization in the germline by regulating mRNA splicing of a subset of genes within the ovary. Probably acts by regulating the alternative splice site selection of the otu transcript. Also regulates the alternative splicing of eIF4E1 and grk, while it is not involved in the splicing of par-1, sqd or psq. Involved in the alternative splicing of the bicistronic pre-mRNA encoding Kdm3 and CG8176; required for the efficient production of mRNA encoding Kdm3 and Kdm3-mediated regulation of rhino-dependent piRNA production. The sequence is that of Poly(U)-binding-splicing factor hfp from Drosophila melanogaster (Fruit fly).